The sequence spans 327 residues: uncharacterized protein (327 aa).

The first 23 residues, 1–23 (MGGGRLPPLWLPLLIAWSEWGNC), serve as a signal peptide directing secretion. 2 N-linked (GlcNAc...) asparagine; by host glycosylation sites follow: Asn144 and Asn239. Residues 298–327 (EESEAAEETAAGEASAVAAAAVSEEEQRRE) are disordered. Residues 305-319 (ETAAGEASAVAAAAV) show a composition bias toward low complexity.

This is an uncharacterized protein from Human cytomegalovirus (strain AD169) (HHV-5).